The chain runs to 79 residues: MAQQRRGGFKRRKKVDYIAANKIEYVDYKDTELLSRFVSERGKILPRRVTGTSAKNQRKVTTAIKRARVMALMPYVNED.

This sequence belongs to the bacterial ribosomal protein bS18 family. In terms of assembly, part of the 30S ribosomal subunit. Forms a tight heterodimer with protein bS6.

Functionally, binds as a heterodimer with protein bS6 to the central domain of the 16S rRNA, where it helps stabilize the platform of the 30S subunit. In Streptococcus agalactiae serotype Ia (strain ATCC 27591 / A909 / CDC SS700), this protein is Small ribosomal subunit protein bS18.